We begin with the raw amino-acid sequence, 401 residues long: MTDFQFSKVEDAIEAIRQGKIILVTDDEDRENEGDFICAAEFATPENINFMATYGKGLICTPISTEIAKKLNFHPMVAVNQDNHETAFTVSVDHIDTGTGISAFERSITAMKIVDDNAKATDFRRPGHMFPLIAKDGGVLVRNGHTEATVDLARLAGLKHAGLCCEIMADDGTMMTMPDLQKFAVEHNMPFITIQQLQEYRRKHDSLVKQISVVKMPTKYGEFMAHSFVEVISGKEHVALVKGDLTDGEQVLARIHSECLTGDAFGSQRCDCGQQFAAAMTQIEQEGRGVILYLRQEGRGIGLINKLRAYELQDKGMDTVEANVALGFKEDEREYYIGAQMFQQLGVKSIRLLTNNPAKIEGLKEQGLNIVAREPIIVEPNKNDIDYLKVKQIKMGHMFNF.

The tract at residues 1-203 (MTDFQFSKVE…IQQLQEYRRK (203 aa)) is DHBP synthase. Residues 30–31 (RE), aspartate 35, 142–146 (RNGHT), and glutamate 166 contribute to the D-ribulose 5-phosphate site. Residue glutamate 31 participates in Mg(2+) binding. Histidine 145 serves as a coordination point for Mg(2+). The segment at 204–401 (HDSLVKQISV…QIKMGHMFNF (198 aa)) is GTP cyclohydrolase II. 254 to 258 (RIHSE) is a GTP binding site. Residues cysteine 259, cysteine 270, and cysteine 272 each contribute to the Zn(2+) site. Residues glutamine 275, 297 to 299 (EGR), and threonine 319 each bind GTP. Aspartate 331 (proton acceptor; for GTP cyclohydrolase activity) is an active-site residue. The Nucleophile; for GTP cyclohydrolase activity role is filled by arginine 333. The GTP site is built by threonine 354 and lysine 359.

The protein in the N-terminal section; belongs to the DHBP synthase family. In the C-terminal section; belongs to the GTP cyclohydrolase II family. Mg(2+) serves as cofactor. Requires Mn(2+) as cofactor. It depends on Zn(2+) as a cofactor.

The catalysed reaction is D-ribulose 5-phosphate = (2S)-2-hydroxy-3-oxobutyl phosphate + formate + H(+). It carries out the reaction GTP + 4 H2O = 2,5-diamino-6-hydroxy-4-(5-phosphoribosylamino)-pyrimidine + formate + 2 phosphate + 3 H(+). Its pathway is cofactor biosynthesis; riboflavin biosynthesis; 2-hydroxy-3-oxobutyl phosphate from D-ribulose 5-phosphate: step 1/1. It functions in the pathway cofactor biosynthesis; riboflavin biosynthesis; 5-amino-6-(D-ribitylamino)uracil from GTP: step 1/4. Catalyzes the conversion of D-ribulose 5-phosphate to formate and 3,4-dihydroxy-2-butanone 4-phosphate. Its function is as follows. Catalyzes the conversion of GTP to 2,5-diamino-6-ribosylamino-4(3H)-pyrimidinone 5'-phosphate (DARP), formate and pyrophosphate. This chain is Riboflavin biosynthesis protein RibBA, found in Actinobacillus pleuropneumoniae serotype 7 (strain AP76).